The chain runs to 460 residues: MVRRRVLLATFPAQGHINPALQFAKRLLKAGTDVTFFTSVYAWRRMANTASAAAGNPPGLDFVAFSDGYDDGLKPCGDGKRYMSEMKARGSEALRNLLLNNHDVTFVVYSHLFAWAAEVARESQVPSALLWVEPATVLCIYYFYFNGYADEIDAGSDEIQLPRLPPLEQRSLPTFLLPETPERFRLMMKEKLETLDGEEKAKVLVNTFDALEPDALTAIDRYELIGIGPLIPSAFLDGGDPSETSYGGDLFEKSEENNCVEWLDTKPKSSVVYVSFGSVLRFPKAQMEEIGKGLLACGRPFLWMIREQKNDDGEEEEEELSCIGELKKMGKIVSWCSQLEVLAHPALGCFVTHCGWNSAVESLSCGVPVVAVPQWFDQTTNAKLIEDAWGTGVRVRMNEGGGVDGSEIERCVEMVMDGGEKSKLVRENAIKWKTLAREAMGEDGSSLKNLNAFLHQVARA.

Residues 1 to 22 (MVRRRVLLATFPAQGHINPALQ) form the signal peptide. The active-site Proton acceptor is the histidine 16. Histidine 16 is a binding site for an anthocyanidin. UDP-alpha-D-glucose contacts are provided by glutamine 338, histidine 353, tryptophan 356, asparagine 357, serine 358, glutamate 361, aspartate 377, and glutamine 378.

This sequence belongs to the UDP-glycosyltransferase family.

The catalysed reaction is an anthocyanidin 3-O-beta-D-glucoside + UDP-alpha-D-glucose = an anthocyanidin 3,5-di-O-beta-D-glucoside + UDP + 2 H(+). It functions in the pathway pigment biosynthesis; anthocyanin biosynthesis. Functionally, catalyzes the glucosylation at the O-5 position of anthocyanidin 3-glucosides to form anthocyanidin 3,5-di-O-glucosides using UDP-glucose as sugar donor. Anthocyanidin 3,5-di-O-glucosides are molecules that are responsible for pigmentation. Also acts on anthocyanidin 3-O-(6-O-malonylglucoside). Much less active with hydroxycinnamoylglucose derivatives. No activity in the absence of the 3-O-glucoside group. This is Anthocyanidin 3-O-glucoside 5-O-glucosyltransferase 1 (PF3R4) from Perilla frutescens (Beefsteak mint).